An 86-amino-acid polypeptide reads, in one-letter code: Anti-adapter protein IraP (86 aa).

Positions 1 to 47 (MKNLIAELLLKLAQKEEESKELVAQVEALEIIVTAMLRNMAQSEQQM) form a coiled coil.

This sequence belongs to the IraP family. In terms of assembly, interacts with RssB.

The protein localises to the cytoplasm. Its function is as follows. Inhibits RpoS proteolysis by regulating RssB activity, thereby increasing the stability of the sigma stress factor RpoS especially during phosphate and magnesium starvation, but also in stationary phase and during nitrogen starvation. Its effect on RpoS stability is due to its interaction with RssB, which probably blocks the interaction of RssB with RpoS, and the consequent delivery of the RssB-RpoS complex to the ClpXP protein degradation pathway. The chain is Anti-adapter protein IraP from Salmonella arizonae (strain ATCC BAA-731 / CDC346-86 / RSK2980).